Consider the following 1224-residue polypeptide: WD repeat-containing protein 11 (1224 aa).

2 WD repeats span residues 59 to 108 (KHKA…AQCE) and 111 to 154 (EHAK…KLWK). A phosphoserine mark is found at serine 205 and serine 209. Residues 354-393 (KTVRPFSMVCCPVNENAAALVVSDGRVMIWELKSAVCNRN) form a WD 3 repeat. Phosphoserine is present on residues serine 402 and serine 406. WD repeat units lie at residues 471-510 (RMCPPLTTKNIKMYQPLLAVGTSNGSVLVYHLTSGLLHKE), 566-605 (NDESAIEMIKVSHLKQYLAVVFRDKPLELWDVRTCTLLRE), 708-745 (GSMGSITCIAWKGDTLVLGDMDGNLNFWDLKGRVSRGI), 747-787 (THRS…MVSS), 793-831 (NVTFRILDVDWCTSDKVILASDDGCIRVLEMSMKSACFR), and 893-940 (SLSN…HSLS).

As to quaternary structure, component of the complex WDR11 composed of C17orf75, FAM91A1 and WDR11; FAM91A1 and WDR11 are required for proper location of the complex. Interacts (via the N-terminal and the central portion of the protein) with EMX1. Interacts with GLI3; the interaction associateS EMX1 with GLI3. Interacts with TBC1D23; this interaction may be indirect and recruits TBC1D23 to AP-1-derived vesicles. In terms of tissue distribution, ubiquitous.

Its subcellular location is the cytoplasm. The protein localises to the cytoskeleton. It localises to the cilium basal body. It is found in the nucleus. The protein resides in the cilium axoneme. Its subcellular location is the cytoplasmic vesicle. The protein localises to the golgi apparatus. It localises to the trans-Golgi network. Functionally, involved in the Hedgehog (Hh) signaling pathway, is essential for normal ciliogenesis. Regulates the proteolytic processing of GLI3 and cooperates with the transcription factor EMX1 in the induction of downstream Hh pathway gene expression and gonadotropin-releasing hormone production. WDR11 complex facilitates the tethering of Adaptor protein-1 complex (AP-1)-derived vesicles. WDR11 complex acts together with TBC1D23 to facilitate the golgin-mediated capture of vesicles generated using AP-1. The sequence is that of WD repeat-containing protein 11 (WDR11) from Homo sapiens (Human).